An 854-amino-acid polypeptide reads, in one-letter code: Probable inorganic carbon transporter subunit DabA (854 aa).

Zn(2+)-binding residues include Cys378, Asp380, His560, and Cys575.

It belongs to the inorganic carbon transporter (TC 9.A.2) DabA family. Forms a complex with DabB. Zn(2+) is required as a cofactor.

Its subcellular location is the cell membrane. Part of an energy-coupled inorganic carbon pump. This is Probable inorganic carbon transporter subunit DabA from Bacillus cereus (strain ATCC 14579 / DSM 31 / CCUG 7414 / JCM 2152 / NBRC 15305 / NCIMB 9373 / NCTC 2599 / NRRL B-3711).